Reading from the N-terminus, the 436-residue chain is Adenylosuccinate synthetase (436 aa).

GTP contacts are provided by residues 12–18 (GDEGKGK) and 40–42 (GHT). The active-site Proton acceptor is the aspartate 13. The Mg(2+) site is built by aspartate 13 and glycine 40. IMP contacts are provided by residues 13–16 (DEGK), 38–41 (NAGH), threonine 128, arginine 142, glutamine 223, threonine 238, and arginine 302. Residue histidine 41 is the Proton donor of the active site. 298–304 (TTTGRRR) provides a ligand contact to substrate. GTP is bound by residues arginine 304, 330–332 (KLD), and 412–414 (SLG).

This sequence belongs to the adenylosuccinate synthetase family. Homodimer. Mg(2+) is required as a cofactor.

It is found in the cytoplasm. The catalysed reaction is IMP + L-aspartate + GTP = N(6)-(1,2-dicarboxyethyl)-AMP + GDP + phosphate + 2 H(+). Its pathway is purine metabolism; AMP biosynthesis via de novo pathway; AMP from IMP: step 1/2. In terms of biological role, plays an important role in the de novo pathway of purine nucleotide biosynthesis. Catalyzes the first committed step in the biosynthesis of AMP from IMP. The polypeptide is Adenylosuccinate synthetase (Prochlorococcus marinus (strain MIT 9215)).